The following is a 434-amino-acid chain: Methylenetetrahydrofolate--tRNA-(uracil-5-)-methyltransferase TrmFO (434 aa).

9–14 contributes to the FAD binding site; it reads GAGLAG.

The protein belongs to the MnmG family. TrmFO subfamily. The cofactor is FAD.

Its subcellular location is the cytoplasm. The enzyme catalyses uridine(54) in tRNA + (6R)-5,10-methylene-5,6,7,8-tetrahydrofolate + NADH + H(+) = 5-methyluridine(54) in tRNA + (6S)-5,6,7,8-tetrahydrofolate + NAD(+). It catalyses the reaction uridine(54) in tRNA + (6R)-5,10-methylene-5,6,7,8-tetrahydrofolate + NADPH + H(+) = 5-methyluridine(54) in tRNA + (6S)-5,6,7,8-tetrahydrofolate + NADP(+). In terms of biological role, catalyzes the folate-dependent formation of 5-methyl-uridine at position 54 (M-5-U54) in all tRNAs. In Bacillus pumilus (strain SAFR-032), this protein is Methylenetetrahydrofolate--tRNA-(uracil-5-)-methyltransferase TrmFO.